The following is a 185-amino-acid chain: Elongation factor P (185 aa).

The protein belongs to the elongation factor P family.

The protein localises to the cytoplasm. It functions in the pathway protein biosynthesis; polypeptide chain elongation. In terms of biological role, involved in peptide bond synthesis. Stimulates efficient translation and peptide-bond synthesis on native or reconstituted 70S ribosomes in vitro. Probably functions indirectly by altering the affinity of the ribosome for aminoacyl-tRNA, thus increasing their reactivity as acceptors for peptidyl transferase. In Pseudothermotoga lettingae (strain ATCC BAA-301 / DSM 14385 / NBRC 107922 / TMO) (Thermotoga lettingae), this protein is Elongation factor P.